The chain runs to 87 residues: Small ribosomal subunit protein bS20 (87 aa).

A compositionally biased stretch (basic residues) spans 1–19 (MANHKSALKRHRQSIKRNL). Residues 1–22 (MANHKSALKRHRQSIKRNLRNN) are disordered.

The protein belongs to the bacterial ribosomal protein bS20 family.

Functionally, binds directly to 16S ribosomal RNA. The sequence is that of Small ribosomal subunit protein bS20 from Maridesulfovibrio salexigens (strain ATCC 14822 / DSM 2638 / NCIMB 8403 / VKM B-1763) (Desulfovibrio salexigens).